Reading from the N-terminus, the 567-residue chain is Glutamine-dependent NAD(+) synthetase (567 aa).

A CN hydrolase domain is found at Leu2 to Leu242. The Proton acceptor; for glutaminase activity role is filled by Glu41. The For glutaminase activity role is filled by Lys109. Residue Tyr115 participates in L-glutamine binding. Cys145 (nucleophile; for glutaminase activity) is an active-site residue. Residues Ser172 and Lys178 each coordinate L-glutamine. Residues Pro287 to Lys567 are ligase. Gly316–Ser323 is an ATP binding site. Asn399 serves as a coordination point for deamido-NAD(+). Position 423 (Thr423) interacts with ATP. Deamido-NAD(+)-binding residues include Glu428 and Lys538.

In the C-terminal section; belongs to the NAD synthetase family.

It carries out the reaction deamido-NAD(+) + L-glutamine + ATP + H2O = L-glutamate + AMP + diphosphate + NAD(+) + H(+). It functions in the pathway cofactor biosynthesis; NAD(+) biosynthesis; NAD(+) from deamido-NAD(+) (L-Gln route): step 1/1. Functionally, catalyzes the ATP-dependent amidation of deamido-NAD to form NAD. Uses L-glutamine as a nitrogen source. In Aquifex aeolicus (strain VF5), this protein is Glutamine-dependent NAD(+) synthetase.